Consider the following 160-residue polypeptide: Lipoprotein signal peptidase (160 aa).

Transmembrane regions (helical) follow at residues Val7 to Val27, Gly61 to Ile81, and Ala91 to Phe111. Active-site residues include Asp117 and Asp135. Residues Ile133 to Ala153 form a helical membrane-spanning segment.

Belongs to the peptidase A8 family.

The protein resides in the cell membrane. The catalysed reaction is Release of signal peptides from bacterial membrane prolipoproteins. Hydrolyzes -Xaa-Yaa-Zaa-|-(S,diacylglyceryl)Cys-, in which Xaa is hydrophobic (preferably Leu), and Yaa (Ala or Ser) and Zaa (Gly or Ala) have small, neutral side chains.. Its pathway is protein modification; lipoprotein biosynthesis (signal peptide cleavage). Functionally, this protein specifically catalyzes the removal of signal peptides from prolipoproteins. This Geobacillus thermodenitrificans (strain NG80-2) protein is Lipoprotein signal peptidase.